The sequence spans 258 residues: Acetylglutamate kinase (258 aa).

Substrate contacts are provided by residues 41–42, R63, and N156; that span reads GG.

It belongs to the acetylglutamate kinase family. ArgB subfamily.

It localises to the cytoplasm. It catalyses the reaction N-acetyl-L-glutamate + ATP = N-acetyl-L-glutamyl 5-phosphate + ADP. It participates in amino-acid biosynthesis; L-arginine biosynthesis; N(2)-acetyl-L-ornithine from L-glutamate: step 2/4. Its function is as follows. Catalyzes the ATP-dependent phosphorylation of N-acetyl-L-glutamate. The protein is Acetylglutamate kinase of Geobacillus kaustophilus (strain HTA426).